The chain runs to 323 residues: tRNA dimethylallyltransferase (323 aa).

An ATP-binding site is contributed by Gly-18 to Thr-25. Residue Thr-20–Thr-25 participates in substrate binding. Residues Asp-44 to Leu-47 form an interaction with substrate tRNA region.

Belongs to the IPP transferase family. As to quaternary structure, monomer. The cofactor is Mg(2+).

The enzyme catalyses adenosine(37) in tRNA + dimethylallyl diphosphate = N(6)-dimethylallyladenosine(37) in tRNA + diphosphate. Functionally, catalyzes the transfer of a dimethylallyl group onto the adenine at position 37 in tRNAs that read codons beginning with uridine, leading to the formation of N6-(dimethylallyl)adenosine (i(6)A). The chain is tRNA dimethylallyltransferase from Blochmanniella floridana.